The primary structure comprises 164 residues: Large ribosomal subunit protein bL9 (164 aa).

The protein belongs to the bacterial ribosomal protein bL9 family.

In terms of biological role, binds to the 23S rRNA. The sequence is that of Large ribosomal subunit protein bL9 from Psychrobacter sp. (strain PRwf-1).